The sequence spans 139 residues: Putative general secretion pathway protein B (139 aa).

The chain crosses the membrane as a helical span at residues 28–48 (IIYVICLLLICLWFAGMVLVG). The segment at 93–139 (VEEEDDPGVAVENAPSSSEDEENTVEESEEKAGLRERVKNALNELER) is disordered. Over residues 110-121 (SEDEENTVEESE) the composition is skewed to acidic residues. The span at 122-139 (EKAGLRERVKNALNELER) shows a compositional bias: basic and acidic residues.

Its subcellular location is the cell membrane. Functionally, part of a cryptic operon that encodes proteins involved in type II secretion pathway in other organisms, but is not expressed in strain K12 under standard laboratory conditions. May play a regulatory role under conditions of derepressed gsp gene expression. In Escherichia coli (strain K12), this protein is Putative general secretion pathway protein B.